The chain runs to 89 residues: Small ribosomal subunit protein uS15 (89 aa).

It belongs to the universal ribosomal protein uS15 family. As to quaternary structure, part of the 30S ribosomal subunit. Forms a bridge to the 50S subunit in the 70S ribosome, contacting the 23S rRNA.

Its function is as follows. One of the primary rRNA binding proteins, it binds directly to 16S rRNA where it helps nucleate assembly of the platform of the 30S subunit by binding and bridging several RNA helices of the 16S rRNA. Forms an intersubunit bridge (bridge B4) with the 23S rRNA of the 50S subunit in the ribosome. This chain is Small ribosomal subunit protein uS15, found in Pectobacterium carotovorum subsp. carotovorum (strain PC1).